A 122-amino-acid chain; its full sequence is Small ribosomal subunit protein uS13 (122 aa).

The interval 94–122 is disordered; the sequence is KQLPVRGQRTHTNARTRKGKAKPIAGKKK.

It belongs to the universal ribosomal protein uS13 family. In terms of assembly, part of the 30S ribosomal subunit. Forms a loose heterodimer with protein S19. Forms two bridges to the 50S subunit in the 70S ribosome.

Located at the top of the head of the 30S subunit, it contacts several helices of the 16S rRNA. In the 70S ribosome it contacts the 23S rRNA (bridge B1a) and protein L5 of the 50S subunit (bridge B1b), connecting the 2 subunits; these bridges are implicated in subunit movement. Contacts the tRNAs in the A and P-sites. This chain is Small ribosomal subunit protein uS13, found in Methylorubrum extorquens (strain PA1) (Methylobacterium extorquens).